The primary structure comprises 218 residues: Ribose-5-phosphate isomerase A (218 aa).

Substrate-binding positions include 28 to 31 (TGST), 81 to 84 (DGAD), and 94 to 97 (KGGG). The active-site Proton acceptor is Glu-103. Residue Lys-121 coordinates substrate.

It belongs to the ribose 5-phosphate isomerase family. Homodimer.

It carries out the reaction aldehydo-D-ribose 5-phosphate = D-ribulose 5-phosphate. It functions in the pathway carbohydrate degradation; pentose phosphate pathway; D-ribose 5-phosphate from D-ribulose 5-phosphate (non-oxidative stage): step 1/1. Catalyzes the reversible conversion of ribose-5-phosphate to ribulose 5-phosphate. This chain is Ribose-5-phosphate isomerase A, found in Sodalis glossinidius (strain morsitans).